Reading from the N-terminus, the 622-residue chain is E3 ubiquitin-protein ligase RNF12-A (622 aa).

Disordered regions lie at residues 1-26 (MESA…MDRL), 67-386 (RLQQ…ESER), and 473-514 (NANA…NSRG). Residues 11–21 (SIEQSESQRQS) show a composition bias toward low complexity. Polar residues-rich tracts occupy residues 110-138 (SVRQ…NPNS) and 147-163 (INVN…SLDQ). The span at 216–242 (RSPDQRRTRARTDRSRSPLHHAVDPPI) shows a compositional bias: basic and acidic residues. Positions 247–256 (HSSSQTVDTS) are enriched in polar residues. Positions 272–289 (SSQVQNSSSSNETEGSSR) are enriched in low complexity. Polar residues predominate over residues 300-317 (VLGTEGQSQSTVHLSNPE). Low complexity predominate over residues 318-331 (TRSSSQTPQTDSST). Over residues 332 to 341 (NAETTGTGQR) the composition is skewed to polar residues. The span at 355-365 (RPGDYRQRDSI) shows a compositional bias: basic and acidic residues. Residues 366–382 (ANRTRSRSQTPNNTVTY) show a composition bias toward polar residues. The RING-type; atypical zinc finger occupies 568–609 (CSVCITEYTEGNKLRKLPCSHEYHIHCIDRWLSENSTCPICR). Positions 619–622 (ESIV) match the PDZ-binding motif.

It belongs to the RNF12 family. Forms homodimers through the C-terminal region. The N-terminus interacts with the homeobox of LIM/homeobox factor lhx1/lim1, with lhx3/lim3 and lhx5/lim5, and with the N-terminus of ldb1. Shows overlapping expression with lhx1/lim1 and ldb1 in the gastrula mesoderm, and expression overlaps with ldb1 throughout early embryogenesis. After gastrulation, expression is gradually restricted to tissues originated from the ectoderm, the neuroectoderm, neural crest and epidermis, and subsequently to the neural tube as well as the head and tailbud region.

It localises to the nucleus. The catalysed reaction is S-ubiquitinyl-[E2 ubiquitin-conjugating enzyme]-L-cysteine + [acceptor protein]-L-lysine = [E2 ubiquitin-conjugating enzyme]-L-cysteine + N(6)-ubiquitinyl-[acceptor protein]-L-lysine.. It participates in protein modification; protein ubiquitination. In terms of biological role, acts as an E3 ubiquitin-protein ligase specific for ldb1, mediating ubiquitination and proteasome-dependent degradation of excess ldb1 in a RING-dependent manner. Does not degrade ldb1 bound to lhx1/lim1, nor lim1 itself and thus contributes to the establishment of proper ldb1-lhx1/lim1 stoichiometry and the formation of a ldb1-lhx1/lim1 complex. Interferes with Spemann organizer function and suppresses secondary axis formation induced by ldb1 and lhx1/lim1. The sequence is that of E3 ubiquitin-protein ligase RNF12-A (rnf12-a) from Xenopus laevis (African clawed frog).